The sequence spans 270 residues: Short chain dehydrogenase/reductase dpfgG (270 aa).

The NADP(+) site is built by Ile18, Asp69, Asn96, Lys130, Lys171, Ile200, and Asn204. Lys171 functions as the Lowers pKa of active site Tyr in the catalytic mechanism.

The protein belongs to the short-chain dehydrogenases/reductases (SDR) family.

It participates in secondary metabolite biosynthesis; terpenoid biosynthesis. In terms of biological role, short chain dehydrogenase/reductase; part of the gene cluster that mediates the biosynthesis of diterpenoid pyrones. The first step of the pathway is the synthesis of the alpha-pyrone moiety by the polyketide synthase dpfgA via condensation of one acetyl-CoA starter unit with 3 malonyl-CoA units and 2 methylations. The alpha-pyrone is then combined with geranylgeranyl pyrophosphate (GGPP) formed by the GGPP synthase dpfgD through the action of the prenyltransferase dpfgC to yield a linear alpha-pyrone diterpenoid. Subsequent steps in the diterpenoid pyrone biosynthetic pathway involve the decalin core formation, which is initiated by the epoxidation of the C10-C11 olefin by the FAD-dependent oxidoreductase dpfgE, and is followed by a cyclization cascade catalyzed by the terpene cyclase dpfgB. The short chain dehydrogenase/reductase dpfgG then oxidizes the 8S hydroxy group to a ketone and the short chain dehydrogenase/reductase dpfgH reduces the ketone to the 8R hydroxy group to yield higginsianin B. Higginsianin B is further methylated by the methyltransferase dpfgI to produce the intermediate named FDDP B. The cytochrome P450 monooxygenase dfgpJ then catalyzes a three-step oxidation at C-27 to generate a carboxylic acid as well as C-26 hydroxylation. Finally, methyltransferase dpfgK methylates the carboxylic acid generated by dpfgJ, yielding the final diterpenoid pyrones from the pathway which were named FDDP D and FDDP E. The chain is Short chain dehydrogenase/reductase dpfgG from Gibberella zeae (strain ATCC MYA-4620 / CBS 123657 / FGSC 9075 / NRRL 31084 / PH-1) (Wheat head blight fungus).